Reading from the N-terminus, the 127-residue chain is Anti-adapter protein IraD (127 aa).

This sequence belongs to the GpW/Gp25 family. IraD subfamily. In terms of assembly, interacts with RssB.

The protein resides in the cytoplasm. Inhibits RpoS proteolysis by regulating RssB activity, thereby increasing the stability of the sigma stress factor RpoS during oxidative stress. Its effect on RpoS stability is due to its interaction with RssB, which probably blocks the interaction of RssB with RpoS, and the consequent delivery of the RssB-RpoS complex to the ClpXP protein degradation pathway. The sequence is that of Anti-adapter protein IraD from Escherichia coli (strain SMS-3-5 / SECEC).